Here is a 360-residue protein sequence, read N- to C-terminus: Glutamate 5-kinase (360 aa).

Residue Lys-7 coordinates ATP. Substrate-binding residues include Ser-47, Asp-134, and Asn-146. ATP contacts are provided by residues 166-167 (TD) and 210-216 (TGGISTK). The 82-residue stretch at 275 to 356 (VGKITLDDGA…SSIIVVHRDV (82 aa)) folds into the PUA domain.

It belongs to the glutamate 5-kinase family.

The protein resides in the cytoplasm. It carries out the reaction L-glutamate + ATP = L-glutamyl 5-phosphate + ADP. The protein operates within amino-acid biosynthesis; L-proline biosynthesis; L-glutamate 5-semialdehyde from L-glutamate: step 1/2. Catalyzes the transfer of a phosphate group to glutamate to form L-glutamate 5-phosphate. This chain is Glutamate 5-kinase, found in Prochlorococcus marinus (strain MIT 9312).